Here is a 190-residue protein sequence, read N- to C-terminus: Threonylcarbamoyl-AMP synthase (190 aa).

In terms of domain architecture, YrdC-like spans 10–190 (PQDKESVYRH…DWHSRQVIRA (181 aa)).

It belongs to the SUA5 family. TsaC subfamily.

Its subcellular location is the cytoplasm. The enzyme catalyses L-threonine + hydrogencarbonate + ATP = L-threonylcarbamoyladenylate + diphosphate + H2O. Required for the formation of a threonylcarbamoyl group on adenosine at position 37 (t(6)A37) in tRNAs that read codons beginning with adenine. Catalyzes the conversion of L-threonine, HCO(3)(-)/CO(2) and ATP to give threonylcarbamoyl-AMP (TC-AMP) as the acyladenylate intermediate, with the release of diphosphate. The chain is Threonylcarbamoyl-AMP synthase from Dichelobacter nodosus (strain VCS1703A).